Consider the following 414-residue polypeptide: MTKNFLDPQLAKAVSGEEERQRHNIELVASENFVSKAVRQAQGSVLTNKYSEGYPGKRYYGGNEYIDIAENLAIERAKELFGVSYANVQPHSGSSANFEAYMAFLHPGDKILGMNLDSGGHLTHGASVSFSGKMYEAQSYKVDSETELLDYDAILKQAKEFKPNLIIAGASAYSRTIDFQAFRDIADEVNAYLMVDIAHIAGLIAAGLHPSPVGLADIITTTTHKTLRGPCGGMILADEKYAKRINSAVFPGSQGGPLDHVVAAKAAAFYEDLQPDFKTYSAQIIKNAKTMADAFSKEPDVRVVSGGTDNHMFTLDLTKTGLNGRQVQDLLDSVSITLNREALPNEKRSPFVTSGVRIGTPAMTTKGLKENEMLQIEHLIMRAIHAHDDKNELTKIKRDVFDLMDKFPFDSNPF.

(6S)-5,6,7,8-tetrahydrofolate is bound by residues L116 and 120-122; that span reads GHL. Position 225 is an N6-(pyridoxal phosphate)lysine (K225). Position 349–351 (349–351) interacts with (6S)-5,6,7,8-tetrahydrofolate; sequence SPF.

Belongs to the SHMT family. In terms of assembly, homodimer. Pyridoxal 5'-phosphate serves as cofactor.

It localises to the cytoplasm. It catalyses the reaction (6R)-5,10-methylene-5,6,7,8-tetrahydrofolate + glycine + H2O = (6S)-5,6,7,8-tetrahydrofolate + L-serine. Its pathway is one-carbon metabolism; tetrahydrofolate interconversion. The protein operates within amino-acid biosynthesis; glycine biosynthesis; glycine from L-serine: step 1/1. Functionally, catalyzes the reversible interconversion of serine and glycine with tetrahydrofolate (THF) serving as the one-carbon carrier. This reaction serves as the major source of one-carbon groups required for the biosynthesis of purines, thymidylate, methionine, and other important biomolecules. Also exhibits THF-independent aldolase activity toward beta-hydroxyamino acids, producing glycine and aldehydes, via a retro-aldol mechanism. The chain is Serine hydroxymethyltransferase from Oenococcus oeni (strain ATCC BAA-331 / PSU-1).